Here is a 275-residue protein sequence, read N- to C-terminus: Diaminopimelate epimerase (275 aa).

Asparagine 12, glutamine 45, and asparagine 65 together coordinate substrate. The Proton donor role is filled by cysteine 74. Substrate contacts are provided by residues 75-76 (GN), asparagine 158, asparagine 191, and 209-210 (ER). Cysteine 218 (proton acceptor) is an active-site residue. 219–220 (GT) contributes to the substrate binding site.

The protein belongs to the diaminopimelate epimerase family. As to quaternary structure, homodimer.

It localises to the cytoplasm. The enzyme catalyses (2S,6S)-2,6-diaminopimelate = meso-2,6-diaminopimelate. It functions in the pathway amino-acid biosynthesis; L-lysine biosynthesis via DAP pathway; DL-2,6-diaminopimelate from LL-2,6-diaminopimelate: step 1/1. Catalyzes the stereoinversion of LL-2,6-diaminopimelate (L,L-DAP) to meso-diaminopimelate (meso-DAP), a precursor of L-lysine and an essential component of the bacterial peptidoglycan. This chain is Diaminopimelate epimerase, found in Shewanella baltica (strain OS223).